The sequence spans 376 residues: Queuine tRNA-ribosyltransferase (376 aa).

Asp-90 functions as the Proton acceptor in the catalytic mechanism. Substrate-binding positions include 90–94 (DSGGF), Asp-144, Gln-193, and Gly-220. The segment at 251–257 (GVGTPED) is RNA binding. Residue Asp-270 is the Nucleophile of the active site. The tract at residues 275-279 (TRNAR) is RNA binding; important for wobble base 34 recognition. Residues Cys-308, Cys-310, Cys-313, and His-339 each contribute to the Zn(2+) site.

It belongs to the queuine tRNA-ribosyltransferase family. As to quaternary structure, homodimer. Within each dimer, one monomer is responsible for RNA recognition and catalysis, while the other monomer binds to the replacement base PreQ1. Zn(2+) is required as a cofactor.

The catalysed reaction is 7-aminomethyl-7-carbaguanine + guanosine(34) in tRNA = 7-aminomethyl-7-carbaguanosine(34) in tRNA + guanine. It functions in the pathway tRNA modification; tRNA-queuosine biosynthesis. In terms of biological role, catalyzes the base-exchange of a guanine (G) residue with the queuine precursor 7-aminomethyl-7-deazaguanine (PreQ1) at position 34 (anticodon wobble position) in tRNAs with GU(N) anticodons (tRNA-Asp, -Asn, -His and -Tyr). Catalysis occurs through a double-displacement mechanism. The nucleophile active site attacks the C1' of nucleotide 34 to detach the guanine base from the RNA, forming a covalent enzyme-RNA intermediate. The proton acceptor active site deprotonates the incoming PreQ1, allowing a nucleophilic attack on the C1' of the ribose to form the product. After dissociation, two additional enzymatic reactions on the tRNA convert PreQ1 to queuine (Q), resulting in the hypermodified nucleoside queuosine (7-(((4,5-cis-dihydroxy-2-cyclopenten-1-yl)amino)methyl)-7-deazaguanosine). The chain is Queuine tRNA-ribosyltransferase from Campylobacter concisus (strain 13826).